The sequence spans 171 residues: Ribosome maturation factor RimP (171 aa).

It belongs to the RimP family.

The protein resides in the cytoplasm. In terms of biological role, required for maturation of 30S ribosomal subunits. This is Ribosome maturation factor RimP from Anaeromyxobacter dehalogenans (strain 2CP-C).